We begin with the raw amino-acid sequence, 714 residues long: BRCA1-associated RING domain protein 1 (714 aa).

An RING-type zinc finger spans residues 25-63 (CPLCLKLLNRPVLLPCDHVFCDSCVHKSSQVESGCPVCK). Disordered stretches follow at residues 106 to 165 (YKND…QDWT) and 254 to 283 (KAQNHQQLPKSHTEQDSKRKRDITASDAME). Basic and acidic residues predominate over residues 118 to 134 (KHGESEDSEMTDKDVSK). The segment covering 135-147 (RSGGTDSSSRDGS) has biased composition (low complexity). 2 stretches are compositionally biased toward basic and acidic residues: residues 155–165 (SDPRPKHQDWT) and 264–283 (SHTEQDSKRKRDITASDAME). A C2HC pre-PHD-type zinc finger spans residues 331 to 382 (ITICGFCQSARVSEATGEMLHYSRGRPVDGDDIFRSNVIHVHSACIEWAPQV). The PHD-type zinc finger occupies 402-451 (IKCTKCSLKGAALGCFVKSCRRSYHVPCAREISRCRWDYEDFLLLCPAHS). 2 BRCT domains span residues 482-577 (EQTP…PFEI) and 598-713 (NKPK…HPVI).

As to quaternary structure, component of a DNA-protein complex on WUS and WOX5 promoters. Interacts with SYD. Forms heterodimer with BRCA1. Expressed in the shoot apical meristem (SAM), roots, flowers, embryos and seedlings. Mostly expressed in flowers and siliques, and, to a lower extent, in roots, rosette leaves, inflorescence and young cauline leaves.

Its subcellular location is the nucleus. Its function is as follows. Binds specifically to H3K4me3 regions of target genes (e.g. WUS and WOX5) promoters to repress their transcription via chromatin remodeling. Required for the shoot apical meristem (SAM) organization and maintenance, by confining WUS expression to the organizing center, and for the quiescent center (QC) development in the root apical meristem (RAM), by repressing WOX5 expression in the root proximal meristem. Plays a role in DNA repair and in cell-cycle control. Required for the repair of DNA double-strand breaks (DSBs), both natural and induced by genotoxic stress, by homologous recombination (HR). The chain is BRCA1-associated RING domain protein 1 from Arabidopsis thaliana (Mouse-ear cress).